The following is a 360-amino-acid chain: Phospho-N-acetylmuramoyl-pentapeptide-transferase (360 aa).

The next 10 membrane-spanning stretches (helical) occupy residues 26–46 (AILGVLTALIIAFLVGPAMIR), 70–90 (GTPTMGGALILVAVAVSTLLW), 97–117 (FVWVVLMVTLLFGLIGGIDDY), 134–154 (FFWQSVVGFATAILLYYTAQA), 168–188 (VAIQLGPWFILLTWFVIVGAS), 199–219 (GLAIMPTVLVAGAFGVFAYLS), 236–256 (VGDLVVFTGALVGAGLGFLWF), 263–283 (VFMGDVGALALGAALGVLAVV), 288–308 (IVLVIMGGVFVVETLSVIMQV), and 338–358 (VIVRFWIITVILVLVGLATLK).

Belongs to the glycosyltransferase 4 family. MraY subfamily. The cofactor is Mg(2+).

It localises to the cell inner membrane. The enzyme catalyses UDP-N-acetyl-alpha-D-muramoyl-L-alanyl-gamma-D-glutamyl-meso-2,6-diaminopimeloyl-D-alanyl-D-alanine + di-trans,octa-cis-undecaprenyl phosphate = di-trans,octa-cis-undecaprenyl diphospho-N-acetyl-alpha-D-muramoyl-L-alanyl-D-glutamyl-meso-2,6-diaminopimeloyl-D-alanyl-D-alanine + UMP. Its pathway is cell wall biogenesis; peptidoglycan biosynthesis. Its function is as follows. Catalyzes the initial step of the lipid cycle reactions in the biosynthesis of the cell wall peptidoglycan: transfers peptidoglycan precursor phospho-MurNAc-pentapeptide from UDP-MurNAc-pentapeptide onto the lipid carrier undecaprenyl phosphate, yielding undecaprenyl-pyrophosphoryl-MurNAc-pentapeptide, known as lipid I. The protein is Phospho-N-acetylmuramoyl-pentapeptide-transferase of Thioalkalivibrio sulfidiphilus (strain HL-EbGR7).